A 529-amino-acid chain; its full sequence is uncharacterized protein (529 aa).

The segment at residues 26 to 58 is a DNA-binding region (zn(2)-C6 fungal-type); that stretch reads CDSCRKQKTRCLAGSVEDENRACLRCRSLNMDC.

Its subcellular location is the nucleus. This is an uncharacterized protein from Schizosaccharomyces pombe (strain 972 / ATCC 24843) (Fission yeast).